We begin with the raw amino-acid sequence, 262 residues long: Thiazole synthase (262 aa).

Catalysis depends on Lys97, which acts as the Schiff-base intermediate with DXP. Residues Gly158, 185–186, and 207–208 each bind 1-deoxy-D-xylulose 5-phosphate; these read AG and NT. Residues 243–262 form a disordered region; it reads DKAQASTPTVGQPFWHSAEY.

This sequence belongs to the ThiG family. In terms of assembly, homotetramer. Forms heterodimers with either ThiH or ThiS.

The protein localises to the cytoplasm. It catalyses the reaction [ThiS sulfur-carrier protein]-C-terminal-Gly-aminoethanethioate + 2-iminoacetate + 1-deoxy-D-xylulose 5-phosphate = [ThiS sulfur-carrier protein]-C-terminal Gly-Gly + 2-[(2R,5Z)-2-carboxy-4-methylthiazol-5(2H)-ylidene]ethyl phosphate + 2 H2O + H(+). It functions in the pathway cofactor biosynthesis; thiamine diphosphate biosynthesis. Catalyzes the rearrangement of 1-deoxy-D-xylulose 5-phosphate (DXP) to produce the thiazole phosphate moiety of thiamine. Sulfur is provided by the thiocarboxylate moiety of the carrier protein ThiS. In vitro, sulfur can be provided by H(2)S. This is Thiazole synthase from Neisseria meningitidis serogroup B (strain ATCC BAA-335 / MC58).